A 1773-amino-acid polypeptide reads, in one-letter code: Zinc finger CCCH domain-containing protein 19 (1773 aa).

The segment at 145 to 166 (SGDRLEENKEVSMEEEPSSHEL) is disordered. A compositionally biased stretch (basic and acidic residues) spans 147 to 156 (DRLEENKEVS). The stretch at 196-218 (GEEIESDLESKKEKVDVIEEETT) forms a coiled coil. 3 disordered regions span residues 270 to 290 (IGEG…DVTE), 361 to 409 (DVDK…AGQT), and 434 to 591 (ISEM…KTVK). 2 stretches are compositionally biased toward basic and acidic residues: residues 273 to 286 (GAKD…KEGV) and 361 to 378 (DVDK…HVPE). Residues 403–437 (AEEAGQTVDLEEIREENQELSKELAQVDETKISEM) adopt a coiled-coil conformation. 2 stretches are compositionally biased toward basic and acidic residues: residues 444 to 455 (MIKDEDQEKDDN) and 497 to 513 (KVDR…TDTR). Acidic residues-rich tracts occupy residues 514–529 (IEDE…TDVA) and 551–572 (EEMT…EVEE). Residues 578 to 588 (GGKRKRGRNTK) show a composition bias toward basic residues. The Nuclear localization signal 1 signature appears at 581–588 (RKRGRNTK). The PHD-type zinc-finger motif lies at 599-665 (EDVCFMCFDG…TYLCYTCMFS (67 aa)). The span at 741–751 (AKRPLKGHETN) shows a compositional bias: basic and acidic residues. The interval 741–797 (AKRPLKGHETNASKQGTASETDYVTDGGSDSDSSPKKRKTRSRSKSGSAEKILSSGD) is disordered. The span at 752–762 (ASKQGTASETD) shows a compositional bias: polar residues. The 84-residue stretch at 801-884 (SDETMEWASK…LNLLDSHFLK (84 aa)) folds into the SWIB/MDM2 domain. Residues 903 to 919 (PNHVDVDENLDHPVKSG) are compositionally biased toward basic and acidic residues. Residues 903-935 (PNHVDVDENLDHPVKSGKDKKRKTRKKNVRKGR) form a disordered region. Basic residues predominate over residues 920–935 (KDKKRKTRKKNVRKGR). A Nuclear localization signal 2 motif is present at residues 921–928 (DKKRKTRK). One can recognise a Plus3 domain in the interval 944–1076 (AVDMHNINLI…KAIALQEVRV (133 aa)). The segment covering 1139 to 1152 (EEIPEIHADPKMDP) has biased composition (basic and acidic residues). Residues 1139–1274 (EEIPEIHADP…PETPARSSRA (136 aa)) form a disordered region. Over residues 1153-1163 (DCESEDEDEKE) the composition is skewed to acidic residues. Residues 1193-1212 (FSSNESWTGTSNYSNTSANR) are compositionally biased toward polar residues. Residue serine 1281 is modified to Phosphoserine. The 55-residue stretch at 1307–1361 (EKIWHYKDPSGKVQGPFSMAQLRKWNNTGYFPAKLEIWKANESPLDSVLLTDALA) folds into the GYF domain. Polar residues-rich tracts occupy residues 1409 to 1433 (RNSQ…TTPT), 1441 to 1469 (SRWS…QSQT), 1499 to 1509 (VSVNHSATLHS), and 1518 to 1528 (SWGSMQTDHGG). 3 disordered regions span residues 1409–1469 (RNSQ…QSQT), 1485–1605 (QPQT…SWGQ), and 1649–1746 (GQTQ…QQNN). The span at 1529–1555 (SNTPSSQNNSTSYGTPSPSVLPSQSQP) shows a compositional bias: low complexity. The segment covering 1569-1579 (SQPNAQAQAQW) has biased composition (polar residues). Low complexity-rich tracts occupy residues 1585 to 1602 (NNNQ…QNSS) and 1666 to 1677 (QSQSQSQVQAQA). Residues 1678-1708 (GTTGSGWMQPGQGIQSGNSNQNWGTQNQTAI) show a composition bias toward polar residues. Low complexity predominate over residues 1722–1735 (GNQQQSQNGDSGYG). Residues 1737–1746 (NRQSGGQQNN) show a composition bias toward polar residues. A C3H1-type zinc finger spans residues 1747–1773 (FKGQRVCKFFRENGHCRKGASCNYLHN).

Interacts with unmethylated histone H3 and AGO2. The interaction with AGO2 in required to direct DNA methylation and silencing. Expressed in seedlings, mostly in the vasculature and shoot apices of young seedlings.

It is found in the nucleus. Functionally, plays a central role in integrating RNA silencing and chromatin signals in 21 nt siRNA-dependent DNA methylation on cytosine pathway leading to transcriptional gene silencing of specific sequences. Involved in a chromatin-based RNA silencing pathway that encompasses both post-transcriptional gene silencing (PTGS) (e.g. RDR1, RDR6 and AGO2) and transcriptional gene silencing (TGS) (e.g. siRNA-dependent DNA methylation and histone H3) components. Mediates siRNA accumulation at specific chromatin loci. Binds H3K4me0 through its PHD to enforce low levels of H3K4 methylation and gene silencing at a subset of genomic loci. The sequence is that of Zinc finger CCCH domain-containing protein 19 (NERD) from Arabidopsis thaliana (Mouse-ear cress).